A 2110-amino-acid polypeptide reads, in one-letter code: Tenascin (2110 aa).

The signal sequence occupies residues 1-22; the sequence is MGAVTWLLPGIFLALFALTPEG. Asparagine 38 carries N-linked (GlcNAc...) asparagine glycosylation. Serine 65, serine 70, and serine 72 each carry phosphoserine. Positions 69–91 are disordered; the sequence is ESASGEKDLTPTPESSGSFQEHT. Residue serine 72 is glycosylated (O-linked (Xyl...) (chondroitin sulfate) serine). Residues 80-89 show a composition bias toward polar residues; the sequence is TPESSGSFQE. Positions 118–142 form a coiled coil; it reads DVKELLSRLEELELLVSSLREQCTM. Asparagine 166 and asparagine 184 each carry an N-linked (GlcNAc...) asparagine glycan. Positions 174–185 constitute an EGF-like 1; incomplete domain; that stretch reads CVCEPGWKGPNC. 14 EGF-like domains span residues 186-216, 217-247, 248-279, 280-310, 311-341, 342-372, 373-403, 404-434, 435-465, 466-496, 497-527, 528-558, 559-589, and 590-621; these read SEPDCPGNCNLRGQCLDGQCICDEGFTGEDC, SQLACPNDCNDQGRCVNGVCVCFEGYAGPDC, GLEVCPVPCSEEHGMCVDGRCVCKDGFAGEDC, NEPLCLNNCYNRGRCVENECVCDEGFTGEDC, SELICPNDCFDRGRCINGTCYCEEGFTGEDC, GELTCPNDCQGRGQCEEGQCVCNEGFAGADC, SEKRCPADCHHRGRCLNGQCECDDGFTGADC, GDLQCPNGCSGHGRCVNGQCVCDEGYTGEDC, SQRRCPNDCHNRGLCVQGKCICEQGFKGFDC, SEMSCPNDCHQHGRCVNGMCICDDDYTGEDC, RDRRCPRDCSQRGRCVDGQCICEDGFTGPDC, AELSCPSDCHGHGRCVNGQCICHEGFTGKDC, KEQRCPSDCHGQGRCEDGQCICHEGFTGLDC, and GQRSCPNDCSNQGQCVSGRCICNEGYTGIDCS. Disulfide bonds link cysteine 190–cysteine 200, cysteine 194–cysteine 205, cysteine 207–cysteine 216, cysteine 221–cysteine 231, cysteine 225–cysteine 236, cysteine 238–cysteine 247, cysteine 252–cysteine 263, cysteine 256–cysteine 268, cysteine 270–cysteine 279, cysteine 284–cysteine 294, cysteine 288–cysteine 299, cysteine 301–cysteine 310, cysteine 315–cysteine 325, cysteine 319–cysteine 330, cysteine 332–cysteine 341, cysteine 346–cysteine 356, cysteine 350–cysteine 361, cysteine 363–cysteine 372, cysteine 377–cysteine 387, cysteine 381–cysteine 392, cysteine 394–cysteine 403, cysteine 408–cysteine 418, cysteine 412–cysteine 423, cysteine 425–cysteine 434, cysteine 439–cysteine 449, cysteine 443–cysteine 454, cysteine 456–cysteine 465, cysteine 470–cysteine 480, cysteine 474–cysteine 485, cysteine 487–cysteine 496, cysteine 501–cysteine 511, cysteine 505–cysteine 516, cysteine 518–cysteine 527, cysteine 532–cysteine 542, cysteine 536–cysteine 547, cysteine 549–cysteine 558, cysteine 563–cysteine 573, cysteine 567–cysteine 578, cysteine 580–cysteine 589, cysteine 594–cysteine 604, cysteine 598–cysteine 609, and cysteine 611–cysteine 620. Asparagine 327 is a glycosylation site (N-linked (GlcNAc...) asparagine). Fibronectin type-III domains lie at 625–715, 716–804, 805–894, 895–988, 989–1077, 1078–1165, 1167–1259, 1260–1348, 1349–1440, 1442–1530, 1531–1620, 1621–1710, 1711–1797, and 1798–1886; these read PPKD…LPAP, EGLK…TRLD, APSH…TGLD, APRN…IDAP, KDLR…VPSL, ENLT…TGTT, NLGE…LPQL, GGLS…AREP, EIGN…ALPL, ENLT…EAEP, EVDN…TAMG, SPKE…ALDG, PSGL…TDLD, and SPRE…IGLL. N-linked (GlcNAc...) asparagine glycosylation is present at asparagine 788. A Phosphothreonine modification is found at threonine 905. N-linked (GlcNAc...) asparagine glycosylation is found at asparagine 1018, asparagine 1079, asparagine 1093, asparagine 1119, asparagine 1184, asparagine 1210, asparagine 1275, asparagine 1301, asparagine 1354, asparagine 1364, asparagine 1394, and asparagine 1443. An N-linked (GlcNAc...) asparagine glycan is attached at asparagine 1718. The 216-residue stretch at 1884–2099 folds into the Fibrinogen C-terminal domain; that stretch reads GLLYPFPRDC…FAEMKLRPSN (216 aa). Residues asparagine 1969 and asparagine 2071 are each glycosylated (N-linked (GlcNAc...) asparagine).

The protein belongs to the tenascin family. As to quaternary structure, homohexamer; disulfide-linked. A homotrimer may be formed in the triple coiled-coil region and may be stabilized by disulfide rings at both ends. Two of such half-hexabrachions may be disulfide linked within the central globule. Interacts with CSPG4. Interacts (via the 3rd fibronectin type-III domain) with integrin ITGA9:ITGB1. Post-translationally, N-glycosylated. In terms of tissue distribution, expressed in the corneal limbus, the periosteum and the rib molecular layer of the cerebellum, the matrix of kidney tubules, blood vessels, stomach and intestine (at protein level). As to expression, weakly expressed in the brain. Highly expressed in the thymus and moderately expressed in the brain.

It localises to the secreted. Its subcellular location is the extracellular space. The protein localises to the extracellular matrix. Functionally, extracellular matrix protein implicated in guidance of migrating neurons as well as axons during development, synaptic plasticity as well as neuronal regeneration. Promotes neurite outgrowth when provided to neurons in culture. May play a role in supporting the growth of epithelial tumors. Ligand for integrins ITGA8:ITGB1, ITGA9:ITGB1, ITGAV:ITGB3 and ITGAV:ITGB6. In tumors, stimulates angiogenesis by elongation, migration and sprouting of endothelial cells. The polypeptide is Tenascin (Mus musculus (Mouse)).